A 550-amino-acid chain; its full sequence is Hydroxylamine reductase (550 aa).

The [2Fe-2S] cluster site is built by Cys4, Cys7, Cys19, and Cys26. Positions 249, 273, 317, 405, 433, 458, 492, and 494 each coordinate hybrid [4Fe-2O-2S] cluster. At Cys405 the chain carries Cysteine persulfide.

This sequence belongs to the HCP family. It depends on [2Fe-2S] cluster as a cofactor. The cofactor is hybrid [4Fe-2O-2S] cluster.

The protein localises to the cytoplasm. It catalyses the reaction A + NH4(+) + H2O = hydroxylamine + AH2 + H(+). In terms of biological role, catalyzes the reduction of hydroxylamine to form NH(3) and H(2)O. The chain is Hydroxylamine reductase from Aeromonas salmonicida (strain A449).